The primary structure comprises 111 residues: Nucleoid-associated protein Cpha266_1171 (111 aa).

The protein belongs to the YbaB/EbfC family. As to quaternary structure, homodimer.

It is found in the cytoplasm. The protein localises to the nucleoid. Functionally, binds to DNA and alters its conformation. May be involved in regulation of gene expression, nucleoid organization and DNA protection. The chain is Nucleoid-associated protein Cpha266_1171 from Chlorobium phaeobacteroides (strain DSM 266 / SMG 266 / 2430).